A 314-amino-acid polypeptide reads, in one-letter code: NAC domain-containing protein 10 (314 aa).

Residues 18–39 (VSNTDHPSVQLKDQSQSCVTSR) show a composition bias toward polar residues. Disordered stretches follow at residues 18-48 (VSNT…SAET) and 150-182 (YTTG…PVLS). Residues 77–236 (LPAGVKFDPS…EPVLSKVFYQ (160 aa)) enclose the NAC domain. A compositionally biased stretch (basic and acidic residues) spans 160–171 (VSTDEEGHETRW). A DNA-binding region spans residues 187-242 (TGFKKILVLYTNYGRQKKPEKTNWVMHQYHLGSSEDEKDGEPVLSKVFYQTQPRQC).

Expressed in protoxylem and elongating interfascicular fiber cells of elongating internodes, developing metaxylem cells and interfascicular fibers of non-elongating internodes and developing secondary xylem of roots.

It localises to the nucleus. Its function is as follows. Transcriptional activator that plays a regulatory role in the development of secondary cell wall fibers. Is a direct target of SND1. The protein is NAC domain-containing protein 10 of Arabidopsis thaliana (Mouse-ear cress).